We begin with the raw amino-acid sequence, 154 residues long: Large ribosomal subunit protein uL22c (154 aa).

This sequence belongs to the universal ribosomal protein uL22 family. Part of the 50S ribosomal subunit.

The protein localises to the plastid. It localises to the chloroplast. In terms of biological role, this protein binds specifically to 23S rRNA. Its function is as follows. The globular domain of the protein is located near the polypeptide exit tunnel on the outside of the subunit, while an extended beta-hairpin is found that lines the wall of the exit tunnel in the center of the 70S ribosome. The chain is Large ribosomal subunit protein uL22c (rpl22) from Jasminum nudiflorum (Winter jasmine).